Reading from the N-terminus, the 591-residue chain is V-type ATP synthase alpha chain (591 aa).

242–249 contacts ATP; it reads GPFGAGKT.

It belongs to the ATPase alpha/beta chains family.

The catalysed reaction is ATP + H2O + 4 H(+)(in) = ADP + phosphate + 5 H(+)(out). Its function is as follows. Produces ATP from ADP in the presence of a proton gradient across the membrane. The V-type alpha chain is a catalytic subunit. The protein is V-type ATP synthase alpha chain of Chlamydia trachomatis serovar L2 (strain ATCC VR-902B / DSM 19102 / 434/Bu).